The following is a 233-amino-acid chain: Homeobox protein Hox-B6b (233 aa).

The short motif at 136–141 is the Antp-type hexapeptide element; that stretch reads IYPWMQ. Residues 155-214 constitute a DNA-binding region (homeobox); the sequence is GRRGRQTYTRYQTLELEKEFHFNRYLTRRRRIEISHALCLTERQIKIWFQNRRMKWKKEN. Positions 213 to 233 are disordered; the sequence is ENKLLNPSKTPEEEEEAEKKS. A compositionally biased stretch (acidic residues) spans 224 to 233; that stretch reads EEEEEAEKKS.

This sequence belongs to the Antp homeobox family.

It is found in the nucleus. Sequence-specific transcription factor which is part of a developmental regulatory system that provides cells with specific positional identities on the anterior-posterior axis. The polypeptide is Homeobox protein Hox-B6b (hoxb6b) (Takifugu rubripes (Japanese pufferfish)).